The primary structure comprises 351 residues: Cyanuric acid amidohydrolase (351 aa).

The RU A stretch occupies residues 1–96 (MPSLRAHVFR…HWTVFARETV (96 aa)). Residues arginine 53 and 77-78 (SG) contribute to the substrate site. Positions 103–240 (ALAIGVSRTP…HEIIVLGMSA (138 aa)) are RU B. Lysine 153 is an active-site residue. Substrate contacts are provided by residues arginine 185 and 223 to 224 (SS). Residue serine 223 is the Nucleophile of the active site. An RU C region spans residues 246-351 (LSIDHAVMLD…PVAIIVEKEQ (106 aa)). A Mg(2+)-binding site is contributed by glutamate 283. Substrate is bound by residues arginine 310 and 329–330 (SG). Mg(2+) is bound by residues alanine 332, glutamine 335, glycine 336, proline 337, and glycine 340.

The protein belongs to the cyclic amide hydrolase (CyAH) family. Homotetramer.

It catalyses the reaction cyanurate + H2O = 1-carboxybiuret + H(+). It functions in the pathway xenobiotic degradation; atrazine degradation; biuret from cyanurate: step 1/1. With respect to regulation, inhibited by barbituric acid. Functionally, responsible for the hydrolysis of cyanuric acid, an intermediate formed during catabolism of s-triazine based compounds in herbicides such as atrazine and polymers such as melamine. Catalyzes the hydrolytic opening of the s-triazine ring of cyanuric acid (2,4,6-trihydroxy-s-triazine) to yield carbon dioxide and carboxybiuret, which spontaneously decarboxylates to biuret. In Rhizobium leguminosarum bv. trifolii (strain WSM1325), this protein is Cyanuric acid amidohydrolase.